The chain runs to 392 residues: Formate-dependent phosphoribosylglycinamide formyltransferase (392 aa).

N(1)-(5-phospho-beta-D-ribosyl)glycinamide is bound by residues Glu22–Leu23 and Glu82. ATP contacts are provided by residues Arg114, Lys155, Ser160 to Gln165, Glu195 to Val198, and Glu203. Positions Arg119–Leu308 constitute an ATP-grasp domain. Mg(2+) contacts are provided by Glu267 and Glu279. N(1)-(5-phospho-beta-D-ribosyl)glycinamide-binding positions include Asp286, Lys355, and Arg362–Arg363.

This sequence belongs to the PurK/PurT family. As to quaternary structure, homodimer.

The catalysed reaction is N(1)-(5-phospho-beta-D-ribosyl)glycinamide + formate + ATP = N(2)-formyl-N(1)-(5-phospho-beta-D-ribosyl)glycinamide + ADP + phosphate + H(+). It participates in purine metabolism; IMP biosynthesis via de novo pathway; N(2)-formyl-N(1)-(5-phospho-D-ribosyl)glycinamide from N(1)-(5-phospho-D-ribosyl)glycinamide (formate route): step 1/1. Functionally, involved in the de novo purine biosynthesis. Catalyzes the transfer of formate to 5-phospho-ribosyl-glycinamide (GAR), producing 5-phospho-ribosyl-N-formylglycinamide (FGAR). Formate is provided by PurU via hydrolysis of 10-formyl-tetrahydrofolate. The protein is Formate-dependent phosphoribosylglycinamide formyltransferase of Klebsiella pneumoniae (strain 342).